The primary structure comprises 428 residues: Pyruvate kinase (428 aa).

Residue Arg-34 participates in substrate binding. Asn-36, Ser-38, Asp-68, and Thr-69 together coordinate K(+). 36 to 39 (NFSH) contacts ATP. ATP-binding residues include Arg-75 and Lys-152. Mg(2+) is bound at residue Glu-214. Substrate is bound by residues Gly-237, Asp-238, and Thr-270. Asp-238 lines the Mg(2+) pocket.

It belongs to the pyruvate kinase family. Homotetramer. Requires Mg(2+) as cofactor. The cofactor is K(+).

The catalysed reaction is pyruvate + ATP = phosphoenolpyruvate + ADP + H(+). It functions in the pathway carbohydrate degradation; glycolysis; pyruvate from D-glyceraldehyde 3-phosphate: step 5/5. The protein is Pyruvate kinase (PYK1) of Encephalitozoon cuniculi (strain GB-M1) (Microsporidian parasite).